A 276-amino-acid polypeptide reads, in one-letter code: MVSLTSVPPYADATPDTRASSGPAPGRRKRMPLREHLAELRTRLLLVAGGLVVGAVVGWLLYDPLLVLLTRPLHLAAATQHKDIALNFTALGSPLDTRIKVSLFLAVMVTCPWWLYQVWAFVTPGLTRREKRHAYGFLGAAVPLFLGGAGLSWWVLPHAVDIFASFVPAGSSQYVNAQEYLSFVMRLVLAFGVAFVAPVLLVALNLAGIVRHETLARGWRWAVLLAFVFAAVMTPTPDALTMVLVAAPICALYFGALGVAVWHDRRADRRTAPAAA.

Residues Met-1–Lys-29 form a disordered region. The next 6 helical transmembrane spans lie at Gly-49–Leu-69, Leu-103–Thr-123, Gly-136–Leu-156, Leu-187–Ala-207, Trp-221–Thr-241, and Met-242–Trp-262.

Belongs to the TatC family. The Tat system comprises two distinct complexes: a TatABC complex, containing multiple copies of TatA, TatB and TatC subunits, and a separate TatA complex, containing only TatA subunits. Substrates initially bind to the TatABC complex, which probably triggers association of the separate TatA complex to form the active translocon.

The protein localises to the cell membrane. Functionally, part of the twin-arginine translocation (Tat) system that transports large folded proteins containing a characteristic twin-arginine motif in their signal peptide across membranes. Together with TatB, TatC is part of a receptor directly interacting with Tat signal peptides. This is Sec-independent protein translocase protein TatC from Xylanimonas cellulosilytica (strain DSM 15894 / JCM 12276 / CECT 5975 / KCTC 9989 / LMG 20990 / NBRC 107835 / XIL07).